We begin with the raw amino-acid sequence, 561 residues long: uncharacterized protein (561 aa).

The segment covering 314–323 has biased composition (low complexity); that stretch reads ANNGSGDSSS. The segment at 314–366 is disordered; that stretch reads ANNGSGDSSSTALNNESPNTTPKSRTFFSPKGHRRNSSHVSSLTSRSTKKPIT. Positions 324-340 are enriched in polar residues; that stretch reads TALNNESPNTTPKSRTF. Ser514 carries the phosphoserine modification.

It is found in the cytoplasm. This is an uncharacterized protein from Saccharomyces cerevisiae (strain ATCC 204508 / S288c) (Baker's yeast).